The sequence spans 353 residues: Protein RecA (353 aa).

Residue 75-82 (GPESSGKT) participates in ATP binding.

This sequence belongs to the RecA family.

The protein resides in the cytoplasm. In terms of biological role, can catalyze the hydrolysis of ATP in the presence of single-stranded DNA, the ATP-dependent uptake of single-stranded DNA by duplex DNA, and the ATP-dependent hybridization of homologous single-stranded DNAs. It interacts with LexA causing its activation and leading to its autocatalytic cleavage. This chain is Protein RecA, found in Cupriavidus pinatubonensis (strain JMP 134 / LMG 1197) (Cupriavidus necator (strain JMP 134)).